The chain runs to 449 residues: Tubulin alpha-8 chain (449 aa).

The short motif at 1–4 (MREC) is the MREC motif element. GTP is bound by residues Gln-11, Glu-71, Ser-140, Gly-144, Thr-145, Thr-179, Asn-206, and Asn-228. Glu-71 serves as a coordination point for Mg(2+). Glu-254 is an active-site residue.

It belongs to the tubulin family. In terms of assembly, dimer of alpha and beta chains. A typical microtubule is a hollow water-filled tube with an outer diameter of 25 nm and an inner diameter of 15 nM. Alpha-beta heterodimers associate head-to-tail to form protofilaments running lengthwise along the microtubule wall with the beta-tubulin subunit facing the microtubule plus end conferring a structural polarity. Microtubules usually have 13 protofilaments but different protofilament numbers can be found in some organisms and specialized cells. Requires Mg(2+) as cofactor. Post-translationally, some glutamate residues at the C-terminus are polyglycylated, resulting in polyglycine chains on the gamma-carboxyl group. Glycylation is mainly limited to tubulin incorporated into axonemes (cilia and flagella) whereas glutamylation is prevalent in neuronal cells, centrioles, axonemes, and the mitotic spindle. Both modifications can coexist on the same protein on adjacent residues, and lowering polyglycylation levels increases polyglutamylation, and reciprocally. Cilia and flagella glycylation is required for their stability and maintenance. Flagella glycylation controls sperm motility. In terms of processing, some glutamate residues at the C-terminus are polyglutamylated, resulting in polyglutamate chains on the gamma-carboxyl group. Polyglutamylation plays a key role in microtubule severing by spastin (SPAST). SPAST preferentially recognizes and acts on microtubules decorated with short polyglutamate tails: severing activity by SPAST increases as the number of glutamates per tubulin rises from one to eight, but decreases beyond this glutamylation threshold. Glutamylation is also involved in cilia motility. The C-terminal phenylalanine residue is cleaved by MATCAP1/KIAA0895L.

It localises to the cytoplasm. It is found in the cytoskeleton. It carries out the reaction GTP + H2O = GDP + phosphate + H(+). Functionally, tubulin is the major constituent of microtubules, a cylinder consisting of laterally associated linear protofilaments composed of alpha- and beta-tubulin heterodimers. Microtubules grow by the addition of GTP-tubulin dimers to the microtubule end, where a stabilizing cap forms. Below the cap, tubulin dimers are in GDP-bound state, owing to GTPase activity of alpha-tubulin. This chain is Tubulin alpha-8 chain (Tuba8), found in Rattus norvegicus (Rat).